Here is a 37-residue protein sequence, read N- to C-terminus: ATP synthase subunit O, mitochondrial (37 aa).

Belongs to the ATPase delta chain family. As to quaternary structure, F-type ATPases have 2 components, CF(1) - the catalytic core - and CF(0) - the membrane proton channel. CF(1) has five subunits: alpha(3), beta(3), gamma(1), delta(1), epsilon(1). CF(0) has three main subunits: a, b and c.

The protein resides in the mitochondrion. It localises to the mitochondrion inner membrane. Its function is as follows. Mitochondrial membrane ATP synthase (F(1)F(0) ATP synthase or Complex V) produces ATP from ADP in the presence of a proton gradient across the membrane which is generated by electron transport complexes of the respiratory chain. F-type ATPases consist of two structural domains, F(1) - containing the extramembraneous catalytic core and F(0) - containing the membrane proton channel, linked together by a central stalk and a peripheral stalk. During catalysis, ATP synthesis in the catalytic domain of F(1) is coupled via a rotary mechanism of the central stalk subunits to proton translocation. Part of the complex F(0) domain and the peripheric stalk, which acts as a stator to hold the catalytic alpha(3)beta(3) subcomplex and subunit a/ATP6 static relative to the rotary elements. The sequence is that of ATP synthase subunit O, mitochondrial from Solanum tuberosum (Potato).